Reading from the N-terminus, the 287-residue chain is Aquaporin PIP1-2 (287 aa).

Positions 1-37 (MEGKEEDVRLGANKFTERQPIGTAAQSQDKDYKEPPP) are disordered. Over 1 to 55 (MEGKEEDVRLGANKFTERQPIGTAAQSQDKDYKEPPPAPLFEPGELSSWSFYRAG) the chain is Cytoplasmic. The helical transmembrane segment at 56-76 (IAEFVATFLFLYITILTVMGV) threads the bilayer. The Extracellular segment spans residues 77–89 (VKSSTKCSTVGIQ). Residues 90 to 110 (GIAWAFGGMIFALVYCTAGIS) traverse the membrane as a helical segment. Over 111 to 133 (GGHINPAVTFGLFLARKLSLTRA) the chain is Cytoplasmic. Positions 115–117 (NPA) match the NPA 1 motif. Residues 134–154 (LFYMVMQCLGAICGAGVVKGF) traverse the membrane as a helical segment. Over 155 to 175 (QKGLYENNGGGANVVAPGYTK) the chain is Extracellular. Residues 176 to 196 (GDGLGAEIVGTFILVYTVFSA) traverse the membrane as a helical segment. Residues 197–209 (TDAKRSARDSHVP) are Cytoplasmic-facing. Residues 210–230 (ILAPLPIGFAVFLVHLATIPI) traverse the membrane as a helical segment. At 231–257 (TGTGINPARSLGAAIIYNKGHAWDDHW) the chain is on the extracellular side. The NPA 2 motif lies at 236-238 (NPA). The chain crosses the membrane as a helical span at residues 258–278 (IFWVGPFIGAALAALYHQVVI). The Cytoplasmic segment spans residues 279 to 287 (RAIPFKSRS).

It belongs to the MIP/aquaporin (TC 1.A.8) family. PIP (TC 1.A.8.11) subfamily. As to expression, barely detectable in roots, leaves and fruits.

Its subcellular location is the cell membrane. In terms of biological role, water channel required to facilitate the transport of water across cell membrane; mercury-insensitive. Contributes to the tolerance to multiple abiotic stresses including salt (NaCl), cold and water deprivation, by modulating cytosolic K(+)/Na(+) ratio, maintaining osmotic balance, and reducing membrane injury (e.g. oxidative injury). This is Aquaporin PIP1-2 from Musa acuminata subsp. malaccensis (Wild banana).